The following is a 1353-amino-acid chain: Trifunctional purine biosynthetic protein adenosine-3 (1353 aa).

The ATP-grasp domain maps to 114-321 (KDFMLRHGIP…LFDVMEACCS (208 aa)). ATP-binding positions include 193 to 196 (EELL), glutamate 200, arginine 223, and asparagine 232. Mg(2+)-binding residues include glutamate 291 and asparagine 293. Residues 441–1155 (GLSYKDSGVD…QKMLSQRRKR (715 aa)) are AIRS domain. A phosphoserine mark is found at serine 814 and serine 816. The interval 1153–1353 (RKRVAVLISG…ALISPEVSSQ (201 aa)) is GART domain. 1164 to 1166 (GSN) serves as a coordination point for N(1)-(5-phospho-beta-D-ribosyl)glycinamide. (6R)-10-formyltetrahydrofolate-binding positions include arginine 1219, 1244 to 1247 (MRVL), and asparagine 1261. Residue histidine 1263 is the Proton donor of the active site. Position 1295–1299 (1295–1299 (DEGVD)) interacts with (6R)-10-formyltetrahydrofolate. N(1)-(5-phospho-beta-D-ribosyl)glycinamide is bound at residue 1325–1328 (HKAE).

This sequence in the N-terminal section; belongs to the GARS family. In the central section; belongs to the AIR synthase family. The protein in the C-terminal section; belongs to the GART family. In terms of assembly, homodimer. Requires Mg(2+) as cofactor. It depends on Mn(2+) as a cofactor.

It catalyses the reaction 5-phospho-beta-D-ribosylamine + glycine + ATP = N(1)-(5-phospho-beta-D-ribosyl)glycinamide + ADP + phosphate + H(+). The enzyme catalyses 2-formamido-N(1)-(5-O-phospho-beta-D-ribosyl)acetamidine + ATP = 5-amino-1-(5-phospho-beta-D-ribosyl)imidazole + ADP + phosphate + H(+). It carries out the reaction N(1)-(5-phospho-beta-D-ribosyl)glycinamide + (6R)-10-formyltetrahydrofolate = N(2)-formyl-N(1)-(5-phospho-beta-D-ribosyl)glycinamide + (6S)-5,6,7,8-tetrahydrofolate + H(+). It functions in the pathway purine metabolism; IMP biosynthesis via de novo pathway; 5-amino-1-(5-phospho-D-ribosyl)imidazole from N(2)-formyl-N(1)-(5-phospho-D-ribosyl)glycinamide: step 2/2. The protein operates within purine metabolism; IMP biosynthesis via de novo pathway; N(1)-(5-phospho-D-ribosyl)glycinamide from 5-phospho-alpha-D-ribose 1-diphosphate: step 2/2. Its pathway is purine metabolism; IMP biosynthesis via de novo pathway; N(2)-formyl-N(1)-(5-phospho-D-ribosyl)glycinamide from N(1)-(5-phospho-D-ribosyl)glycinamide (10-formyl THF route): step 1/1. In terms of biological role, trifunctional enzyme that catalyzes three distinct reactions as part of the 'de novo' inosine monophosphate biosynthetic pathway. The protein is Trifunctional purine biosynthetic protein adenosine-3 of Drosophila melanogaster (Fruit fly).